The chain runs to 234 residues: Large ribosomal subunit protein uL1 (234 aa).

This sequence belongs to the universal ribosomal protein uL1 family. In terms of assembly, part of the 50S ribosomal subunit.

Its function is as follows. Binds directly to 23S rRNA. The L1 stalk is quite mobile in the ribosome, and is involved in E site tRNA release. In terms of biological role, protein L1 is also a translational repressor protein, it controls the translation of the L11 operon by binding to its mRNA. This is Large ribosomal subunit protein uL1 from Salmonella arizonae (strain ATCC BAA-731 / CDC346-86 / RSK2980).